The chain runs to 193 residues: Thymidine kinase (193 aa).

Residues 16 to 23 and 89 to 92 each bind ATP; these read GPMFSGKS and DEIQ. The Proton acceptor role is filled by Glu90. 4 residues coordinate Zn(2+): Cys146, Cys149, Cys184, and Cys187.

The protein belongs to the thymidine kinase family. As to quaternary structure, homotetramer.

It is found in the cytoplasm. It carries out the reaction thymidine + ATP = dTMP + ADP + H(+). The protein is Thymidine kinase of Thermoanaerobacter pseudethanolicus (strain ATCC 33223 / 39E) (Clostridium thermohydrosulfuricum).